An 84-amino-acid polypeptide reads, in one-letter code: Sec-independent protein translocase protein TatA (84 aa).

The chain crosses the membrane as a helical span at residues 1 to 21 (MGGISIWQLLIIAVIVILLFG). Positions 40–84 (KKAMSDEDKPADKKDADFEPKNIEQQKTEASAETTAETKKDKEQA) are disordered. Basic and acidic residues-rich tracts occupy residues 42–66 (AMSDEDKPADKKDADFEPKNIEQQK) and 75–84 (AETKKDKEQA).

Belongs to the TatA/E family. As to quaternary structure, the Tat system comprises two distinct complexes: a TatABC complex, containing multiple copies of TatA, TatB and TatC subunits, and a separate TatA complex, containing only TatA subunits. Substrates initially bind to the TatABC complex, which probably triggers association of the separate TatA complex to form the active translocon.

Its subcellular location is the cell inner membrane. Part of the twin-arginine translocation (Tat) system that transports large folded proteins containing a characteristic twin-arginine motif in their signal peptide across membranes. TatA could form the protein-conducting channel of the Tat system. This is Sec-independent protein translocase protein TatA from Vibrio atlanticus (strain LGP32) (Vibrio splendidus (strain Mel32)).